A 273-amino-acid polypeptide reads, in one-letter code: Cilia- and flagella-associated protein 298-B (273 aa).

It belongs to the CFAP298 family.

Its subcellular location is the cytoplasm. It localises to the cytoskeleton. The protein localises to the cilium basal body. Plays a role in motile cilium function, possibly by acting on outer dynein arm assembly. Seems to be important for initiation rather than maintenance of cilium motility. Required for correct positioning of the cilium at the apical cell surface, suggesting an additional role in the planar cell polarity (PCP) pathway. May suppress canonical Wnt signaling activity. This Xenopus laevis (African clawed frog) protein is Cilia- and flagella-associated protein 298-B (cfap298-b).